The chain runs to 841 residues: Protein NLP6 (841 aa).

In terms of domain architecture, RWP-RK spans 539–624 (EAKTVKKSER…IDSVQGADGS (86 aa)). The segment at 649-682 (NCPPTSTSPLSNLQDVKIENRDAEDSAGSSTSRA) is disordered. A compositionally biased stretch (polar residues) spans 651–662 (PPTSTSPLSNLQ). The 83-residue stretch at 741-823 (LVSIKATYRE…NTLRLSVHDV (83 aa)) folds into the PB1 domain.

It is found in the nucleus. Functionally, probable transcription factor. The protein is Protein NLP6 (NLP6) of Arabidopsis thaliana (Mouse-ear cress).